A 167-amino-acid chain; its full sequence is UPF0114 protein in repA1-repA2 intergenic region (167 aa).

Helical transmembrane passes span 15-35 (LMFP…LKFF), 53-73 (LVLI…LVMV), and 136-156 (IILC…MAYI).

Belongs to the UPF0114 family.

The protein localises to the cell membrane. In Buchnera aphidicola subsp. Pterocomma populeum, this protein is UPF0114 protein in repA1-repA2 intergenic region.